The sequence spans 394 residues: Putative fimbrial assembly protein FimD, serogroup D (394 aa).

The sequence is that of Putative fimbrial assembly protein FimD, serogroup D (fimD) from Dichelobacter nodosus (Bacteroides nodosus).